The primary structure comprises 404 residues: Probable tRNA sulfurtransferase (404 aa).

Positions 60-165 (EEVIPKLSKV…KDAAYLSYET (106 aa)) constitute a THUMP domain. ATP contacts are provided by residues 183-184 (ML), 208-209 (HF), arginine 265, glycine 287, and glutamine 296.

Belongs to the ThiI family.

The protein resides in the cytoplasm. The enzyme catalyses [ThiI sulfur-carrier protein]-S-sulfanyl-L-cysteine + a uridine in tRNA + 2 reduced [2Fe-2S]-[ferredoxin] + ATP + H(+) = [ThiI sulfur-carrier protein]-L-cysteine + a 4-thiouridine in tRNA + 2 oxidized [2Fe-2S]-[ferredoxin] + AMP + diphosphate. It carries out the reaction [ThiS sulfur-carrier protein]-C-terminal Gly-Gly-AMP + S-sulfanyl-L-cysteinyl-[cysteine desulfurase] + AH2 = [ThiS sulfur-carrier protein]-C-terminal-Gly-aminoethanethioate + L-cysteinyl-[cysteine desulfurase] + A + AMP + 2 H(+). The protein operates within cofactor biosynthesis; thiamine diphosphate biosynthesis. In terms of biological role, catalyzes the ATP-dependent transfer of a sulfur to tRNA to produce 4-thiouridine in position 8 of tRNAs, which functions as a near-UV photosensor. Also catalyzes the transfer of sulfur to the sulfur carrier protein ThiS, forming ThiS-thiocarboxylate. This is a step in the synthesis of thiazole, in the thiamine biosynthesis pathway. The sulfur is donated as persulfide by IscS. This Enterococcus faecalis (strain ATCC 700802 / V583) protein is Probable tRNA sulfurtransferase.